The following is a 796-amino-acid chain: Probable phosphoketolase (796 aa).

This sequence belongs to the XFP family. The cofactor is thiamine diphosphate.

The polypeptide is Probable phosphoketolase (Synechococcus elongatus (strain ATCC 33912 / PCC 7942 / FACHB-805) (Anacystis nidulans R2)).